The primary structure comprises 417 residues: Cytochrome b-c1 complex subunit 2, mitochondrial (417 aa).

The transit peptide at 1–22 directs the protein to the mitochondrion; that stretch reads MTRGVPRLAVAARHFSTAEAAG.

The protein belongs to the peptidase M16 family. UQCRC2/QCR2 subfamily. In terms of assembly, component of the ubiquinol-cytochrome c oxidoreductase (cytochrome b-c1 complex, complex III, CIII), a multisubunit enzyme composed of 3 respiratory subunits cytochrome b, cytochrome c1 and Rieske protein, 2 core protein subunits, and additional low-molecular weight protein subunits. The complex exists as an obligatory dimer and forms supercomplexes (SCs) in the inner mitochondrial membrane with cytochrome c oxidase (complex IV, CIV).

It localises to the mitochondrion inner membrane. Its function is as follows. Component of the ubiquinol-cytochrome c oxidoreductase, a multisubunit transmembrane complex that is part of the mitochondrial electron transport chain which drives oxidative phosphorylation. The respiratory chain contains 3 multisubunit complexes succinate dehydrogenase (complex II, CII), ubiquinol-cytochrome c oxidoreductase (cytochrome b-c1 complex, complex III, CIII) and cytochrome c oxidase (complex IV, CIV), that cooperate to transfer electrons derived from NADH and succinate to molecular oxygen, creating an electrochemical gradient over the inner membrane that drives transmembrane transport and the ATP synthase. The cytochrome b-c1 complex catalyzes electron transfer from ubiquinol to cytochrome c, linking this redox reaction to translocation of protons across the mitochondrial inner membrane, with protons being carried across the membrane as hydrogens on the quinol. In the process called Q cycle, 2 protons are consumed from the matrix, 4 protons are released into the intermembrane space and 2 electrons are passed to cytochrome c. The protein is Cytochrome b-c1 complex subunit 2, mitochondrial (QCR2) of Yarrowia lipolytica (strain CLIB 122 / E 150) (Yeast).